Consider the following 20-residue polypeptide: EGPVGLADPDGPASAPLGAP.

The disordered stretch occupies residues 1-20 (EGPVGLADPDGPASAPLGAP).

Its subcellular location is the secreted. In terms of biological role, the synthetic peptide inhibits growth of fungus P.capsici and partially that of V.dahliae, F.graminearum and F.omysporum. The polypeptide is Antimicrobial peptide EP-20 (Xenorhabdus budapestensis).